The chain runs to 907 residues: Translation initiation factor IF-2 (907 aa).

The tract at residues 1-305 (MSEGNDQDQG…SLASVRRQRE (305 aa)) is disordered. Over residues 62 to 80 (SGSGSSGGGRAGGRGGSGG) the composition is skewed to gly residues. Basic and acidic residues-rich tracts occupy residues 93 to 114 (RVLEEQRAEAVRREQERREQEK) and 122 to 158 (EEARRRDEEARRAAEDEVREKEEAAARAREEEAERRA). Residues 211–230 (PARPVTPSRPATPAATPQAP) show a composition bias toward low complexity. Composition is skewed to basic and acidic residues over residues 240–249 (RVGEAEDDRR) and 271–280 (KGGDSRRSGR). One can recognise a tr-type G domain in the interval 406–576 (PRPPVVTVMG…LLQAEMLDLR (171 aa)). A G1 region spans residues 415–422 (GHVDHGKT). Residue 415-422 (GHVDHGKT) participates in GTP binding. The segment at 440-444 (GITQH) is G2. The G3 stretch occupies residues 462–465 (DTPG). Residues 462–466 (DTPGH) and 516–519 (NKCD) contribute to the GTP site. Residues 516–519 (NKCD) form a G4 region. The interval 552–554 (SAL) is G5.

This sequence belongs to the TRAFAC class translation factor GTPase superfamily. Classic translation factor GTPase family. IF-2 subfamily.

The protein resides in the cytoplasm. Its function is as follows. One of the essential components for the initiation of protein synthesis. Protects formylmethionyl-tRNA from spontaneous hydrolysis and promotes its binding to the 30S ribosomal subunits. Also involved in the hydrolysis of GTP during the formation of the 70S ribosomal complex. This chain is Translation initiation factor IF-2, found in Gluconacetobacter diazotrophicus (strain ATCC 49037 / DSM 5601 / CCUG 37298 / CIP 103539 / LMG 7603 / PAl5).